A 328-amino-acid polypeptide reads, in one-letter code: MIFSILEHILTHISFSVVSIVLTIYFFTLLVNLDEIIGFFDSSDKGIVITFFGITGLLFTRWIYSGHFPLSNLYESLIFLSWAFSIIHMVSYFNKKKKNHLNAITAPSAIFIQGFATSGLLNKMPQSAILVPALQSQWLMMHVSMMILGYGALLCGSLLSIALLVITFRKVGPTFWKKNIKKKFLLNELFSFDVFYYINERNSILLQQNINFSFSRNYYRYQLIEQLDYWSFRIISLGFIFLTVGILSGAVWANETWGSYWNWDPKETWAFITWTIFAIYLHIKTNRNVRGINSAIVASIGFLLIWICYFGVNLLGIGLHSYGSFTSN.

A run of 8 helical transmembrane segments spans residues 13–33 (ISFS…LVNL), 46–66 (GIVI…IYSG), 73–93 (LYES…VSYF), 101–121 (LNAI…SGLL), 146–166 (MILG…LLVI), 234–254 (IISL…VWAN), 263–283 (WDPK…YLHI), and 295–315 (AIVA…VNLL).

The protein belongs to the CcmF/CycK/Ccl1/NrfE/CcsA family. In terms of assembly, may interact with Ccs1.

It is found in the plastid. The protein resides in the chloroplast thylakoid membrane. Functionally, required during biogenesis of c-type cytochromes (cytochrome c6 and cytochrome f) at the step of heme attachment. This chain is Cytochrome c biogenesis protein CcsA, found in Barbarea verna (Land cress).